The sequence spans 122 residues: Large ribosomal subunit protein uL14 (122 aa).

The protein belongs to the universal ribosomal protein uL14 family. As to quaternary structure, part of the 50S ribosomal subunit. Forms a cluster with proteins L3 and L19. In the 70S ribosome, L14 and L19 interact and together make contacts with the 16S rRNA in bridges B5 and B8.

In terms of biological role, binds to 23S rRNA. Forms part of two intersubunit bridges in the 70S ribosome. The chain is Large ribosomal subunit protein uL14 from Moorella thermoacetica (strain ATCC 39073 / JCM 9320).